We begin with the raw amino-acid sequence, 398 residues long: Probable aminomethyltransferase (398 aa).

It belongs to the GcvT family. As to quaternary structure, the glycine cleavage system is composed of four proteins: P, T, L and H.

The catalysed reaction is N(6)-[(R)-S(8)-aminomethyldihydrolipoyl]-L-lysyl-[protein] + (6S)-5,6,7,8-tetrahydrofolate = N(6)-[(R)-dihydrolipoyl]-L-lysyl-[protein] + (6R)-5,10-methylene-5,6,7,8-tetrahydrofolate + NH4(+). Functionally, the glycine cleavage system catalyzes the degradation of glycine. This chain is Probable aminomethyltransferase, found in Thermococcus gammatolerans (strain DSM 15229 / JCM 11827 / EJ3).